Here is a 179-residue protein sequence, read N- to C-terminus: Large ribosomal subunit protein uL6 (179 aa).

Belongs to the universal ribosomal protein uL6 family. In terms of assembly, part of the 50S ribosomal subunit.

In terms of biological role, this protein binds to the 23S rRNA, and is important in its secondary structure. It is located near the subunit interface in the base of the L7/L12 stalk, and near the tRNA binding site of the peptidyltransferase center. This is Large ribosomal subunit protein uL6 from Finegoldia magna (strain ATCC 29328 / DSM 20472 / WAL 2508) (Peptostreptococcus magnus).